Here is a 116-residue protein sequence, read N- to C-terminus: Ribosome-binding factor A (116 aa).

The protein belongs to the RbfA family. In terms of assembly, monomer. Binds 30S ribosomal subunits, but not 50S ribosomal subunits or 70S ribosomes.

The protein localises to the cytoplasm. In terms of biological role, one of several proteins that assist in the late maturation steps of the functional core of the 30S ribosomal subunit. Associates with free 30S ribosomal subunits (but not with 30S subunits that are part of 70S ribosomes or polysomes). Required for efficient processing of 16S rRNA. May interact with the 5'-terminal helix region of 16S rRNA. The chain is Ribosome-binding factor A from Ureaplasma urealyticum serovar 10 (strain ATCC 33699 / Western).